A 95-amino-acid chain; its full sequence is Scorpine-like peptide Smp76 (95 aa).

The first 19 residues, 1 to 19, serve as a signal peptide directing secretion; sequence MNCKLTALLFLGLIVIASC. Residues 55-95 form the BetaSPN-type CS-alpha/beta domain; the sequence is EFQCVANVDTLGNCKKHCAKTTGEKGYCHGTKCKCGIELSY. 3 disulfide bridges follow: C58–C82, C68–C87, and C72–C89.

Post-translationally, disulfide bonds are critical for antiviral function, and their disruption inhibit viral activity. In terms of tissue distribution, expressed by the venom gland.

Its subcellular location is the secreted. In terms of biological role, antibacterial peptide. Dose-dependently inhibits Dengue virus (DENV), Zika virus (ZIKV) and Hepatitis C virus (HCV) infections. Two mechanisms of action have been described by two different groups: one involving activity on extracellular particles, and the other regulating the immune system. On Dengue virus (DENV), Zika virus (ZIKV), suppress the established viral infection, similar to the effect of interferon (IFN)-beta. Mechanistically, upregulates the expression of IFN-beta by activating interferon regulatory transcription factor 3 (IRF3) phosphorylation. On HCV and DENV, acts by inactivating extra-cellular infectious particles without affecting viral replication. Shows very weak inhibition on measles virus. Is neither toxic nor hemolytic in vitro at high concentrations. This chain is Scorpine-like peptide Smp76, found in Scorpio palmatus (Israeli golden scorpion).